A 100-amino-acid chain; its full sequence is Small ribosomal subunit protein uS14c (100 aa).

Belongs to the universal ribosomal protein uS14 family. In terms of assembly, part of the 30S ribosomal subunit.

It is found in the plastid. It localises to the chloroplast. Binds 16S rRNA, required for the assembly of 30S particles. The sequence is that of Small ribosomal subunit protein uS14c from Gracilaria tenuistipitata var. liui (Red alga).